The chain runs to 291 residues: Elongation factor Ts (291 aa).

The involved in Mg(2+) ion dislocation from EF-Tu stretch occupies residues T80 to V83.

The protein belongs to the EF-Ts family.

It is found in the cytoplasm. Functionally, associates with the EF-Tu.GDP complex and induces the exchange of GDP to GTP. It remains bound to the aminoacyl-tRNA.EF-Tu.GTP complex up to the GTP hydrolysis stage on the ribosome. The chain is Elongation factor Ts from Limosilactobacillus reuteri (strain DSM 20016) (Lactobacillus reuteri).